The chain runs to 271 residues: Putative pyruvate, phosphate dikinase regulatory protein (271 aa).

151–158 (GISRTSKT) lines the ADP pocket.

It belongs to the pyruvate, phosphate/water dikinase regulatory protein family. PDRP subfamily.

It carries out the reaction N(tele)-phospho-L-histidyl/L-threonyl-[pyruvate, phosphate dikinase] + ADP = N(tele)-phospho-L-histidyl/O-phospho-L-threonyl-[pyruvate, phosphate dikinase] + AMP + H(+). The enzyme catalyses N(tele)-phospho-L-histidyl/O-phospho-L-threonyl-[pyruvate, phosphate dikinase] + phosphate + H(+) = N(tele)-phospho-L-histidyl/L-threonyl-[pyruvate, phosphate dikinase] + diphosphate. Its function is as follows. Bifunctional serine/threonine kinase and phosphorylase involved in the regulation of the pyruvate, phosphate dikinase (PPDK) by catalyzing its phosphorylation/dephosphorylation. This chain is Putative pyruvate, phosphate dikinase regulatory protein, found in Streptococcus uberis (strain ATCC BAA-854 / 0140J).